The chain runs to 206 residues: U-scoloptoxin(08)-Cw1a (206 aa).

The first 24 residues, 1 to 24 (MIFRVNLLFSCFCFVLFVFDFSNA), serve as a signal peptide directing secretion. The propeptide occupies 25 to 164 (SKYDQGSLNI…DLPELKRRKR (140 aa)). The RLWRNWE 1; approximate repeat unit spans residues 37-43 (RLWRDWE). An RLWRNWE 2; approximate repeat occupies 71-77 (RLWRDWE). An RLWRNWE 3; approximate repeat occupies 104–110 (RLWRDWE). The stretch at 137–143 (RLWRNWE) is one RLWRNWE 4 repeat. One copy of the RLWRNWE 5; approximate repeat lies at 164–170 (RLWRNED).

Belongs to the scoloptoxin-08 family. In terms of processing, contains 3 disulfide bonds. As to expression, expressed by the venom gland.

It localises to the secreted. The protein is U-scoloptoxin(08)-Cw1a of Cormocephalus westwoodi (Westwood's green centipede).